The following is a 229-amino-acid chain: Heptahelical transmembrane protein ADIPOR2 (229 aa).

Over Met-1–Ala-4 the chain is Cytoplasmic. The chain crosses the membrane as a helical span at residues Ala-5–Val-25. At Pro-26 to Arg-30 the chain is on the extracellular side. A helical transmembrane segment spans residues Met-31–Ala-51. The Cytoplasmic segment spans residues Cys-52–Tyr-66. The helical transmembrane segment at Ala-67–Cys-87 threads the bilayer. Topologically, residues His-88–Arg-92 are extracellular. The chain crosses the membrane as a helical span at residues Val-93–Pro-113. Over Pro-114 to Arg-124 the chain is Cytoplasmic. The chain crosses the membrane as a helical span at residues Ala-125–Leu-145. Residues Asn-146–Tyr-153 lie on the Extracellular side of the membrane. Residues Leu-154–Val-174 traverse the membrane as a helical segment. Over Ser-175–Gln-194 the chain is Cytoplasmic. Residues Ile-195–Leu-215 traverse the membrane as a helical segment. Topologically, residues Asn-216–Ser-229 are extracellular.

It belongs to the ADIPOR family.

Its subcellular location is the membrane. May play a role in abiotic stress response. The polypeptide is Heptahelical transmembrane protein ADIPOR2 (ADIPOR2) (Oryza sativa subsp. japonica (Rice)).